Reading from the N-terminus, the 320-residue chain is tRNA U34 carboxymethyltransferase (320 aa).

Carboxy-S-adenosyl-L-methionine is bound by residues lysine 89, tryptophan 103, lysine 108, glycine 128, aspartate 150 to threonine 152, isoleucine 179 to glutamate 180, methionine 194, tyrosine 198, and arginine 313.

This sequence belongs to the class I-like SAM-binding methyltransferase superfamily. CmoB family. As to quaternary structure, homotetramer.

The catalysed reaction is carboxy-S-adenosyl-L-methionine + 5-hydroxyuridine(34) in tRNA = 5-carboxymethoxyuridine(34) in tRNA + S-adenosyl-L-homocysteine + H(+). Its function is as follows. Catalyzes carboxymethyl transfer from carboxy-S-adenosyl-L-methionine (Cx-SAM) to 5-hydroxyuridine (ho5U) to form 5-carboxymethoxyuridine (cmo5U) at position 34 in tRNAs. This is tRNA U34 carboxymethyltransferase from Actinobacillus pleuropneumoniae serotype 7 (strain AP76).